A 48-amino-acid chain; its full sequence is Large ribosomal subunit protein bL34c (48 aa).

The protein belongs to the bacterial ribosomal protein bL34 family.

Its subcellular location is the plastid. It is found in the chloroplast. This is Large ribosomal subunit protein bL34c from Thalassiosira pseudonana (Marine diatom).